The sequence spans 53 residues: MRVQLHCIARIHVVYLKEVDLLASLTVQSSSRRAPFLLGPQRQNVGLPPTVHH.

It belongs to the ycf15 family.

Its subcellular location is the plastid. It is found in the chloroplast. This is an uncharacterized protein from Helianthus annuus (Common sunflower).